The sequence spans 176 residues: Inner membrane-spanning protein YciB (176 aa).

5 helical membrane-spanning segments follow: residues 3 to 23 (FLFD…WGIF), 49 to 69 (TMLW…LVLH), 72 to 92 (KFIQ…LVAA), 118 to 138 (KLNL…LYVV), and 149 to 169 (FKLF…SLWL).

The protein belongs to the YciB family.

The protein localises to the cell inner membrane. Its function is as follows. Plays a role in cell envelope biogenesis, maintenance of cell envelope integrity and membrane homeostasis. The polypeptide is Inner membrane-spanning protein YciB (Burkholderia mallei (strain NCTC 10247)).